The sequence spans 327 residues: MVLKSKNTKSKRTNKLELHPRNPHRARYDFALLADSCPELSGFIQLNQYGNESVDFANPNAVKTLNRALLNHFYGVAFWDIPPGYLCPPIPGRADYIHYLADLLAASNLGVIPRGKGVKVLDVGVGANCVYPIIGHQEYGWQFVGSDVNPVAVATCDTIVKSNPCLKGAISARLQTQSAKLFDGVWKEKDRFDLTLCNPPFHTSESAMIDESQRKWRGVKGKKTTTQKPVLNFGGTAAELWCDGGEAGFVSRMVKESVQYADRCFWFTSLVARQGNLDAIYRTLKDVGARQVKTIEMAQGQKISRFVAWSFLGDDQIDYWKDNYWQN.

This sequence belongs to the methyltransferase superfamily. METTL16/RlmF family.

The protein resides in the cytoplasm. The enzyme catalyses adenosine(1618) in 23S rRNA + S-adenosyl-L-methionine = N(6)-methyladenosine(1618) in 23S rRNA + S-adenosyl-L-homocysteine + H(+). Its function is as follows. Specifically methylates the adenine in position 1618 of 23S rRNA. The polypeptide is Ribosomal RNA large subunit methyltransferase F (Marinomonas sp. (strain MWYL1)).